The sequence spans 415 residues: Amino acid decarboxylase lolD2 (415 aa).

Lysine 62 carries the post-translational modification N6-(pyridoxal phosphate)lysine. Pyridoxal 5'-phosphate contacts are provided by residues serine 194, glycine 231, and 266-269 (EPGT). A substrate-binding site is contributed by 315 to 316 (IV). Catalysis depends on cysteine 351, which acts as the Proton donor; shared with dimeric partner. Cysteine 351 carries the S-nitrosocysteine modification. Aspartate 352 serves as a coordination point for substrate. Tyrosine 381 is a binding site for pyridoxal 5'-phosphate.

The protein belongs to the Orn/Lys/Arg decarboxylase class-II family. In terms of assembly, homodimer. It depends on pyridoxal 5'-phosphate as a cofactor.

Its pathway is alkaloid biosynthesis. Its function is as follows. Amino acid decarboxylase; part of the gene cluster that mediates the biosynthesis of loline alkaloids, potent insecticidal agents composed of a pyrrolizidine ring system and an uncommon ether bridge linking carbons 2 and 7. Lolines are structurally differentiated by the various modifications of the L-amino group and include norloline, loline, N-methylloline, N-acetylloline, N-acetylnorloline, and N-formylloline. The first committed step is the condensation of O-acetyl-L-homoserine (derived from L-aspartic acid) and L-proline, probably catalyzed by the gamma-type pyridoxal 5'-phosphate(PLP)-dependent enzyme lolC, to give the diamino diacid, NACPP. Ensuing cyclization, decarboxylation, and acetylation steps yield 1-exo-acetamidopyrrolizidine (AcAP). LolO is required for installation of the ether bridge upon the pathway intermediate, 1-exo-acetamidopyrrolizidine (AcAP). In sequential 2-oxoglutarate- and O(2)-consuming steps, lolO removes hydrogens from C2 and C7 of AcAP to form both carbon-oxygen bonds in N-acetylnorloline (NANL), the precursor to all other lolines. The enzymes lolD, lolE, lolF and lolT have also been proposed to be involved in the ether-bridge installation. Further processing of the exocyclic moiety of NANL by fungal N-acetamidase (LolN), methyltransferase (LolM), and cytochrome P450 (LolP) enzymes, with occasional involvement of a plant acetyltransferase, generates the other known lolines. LolN transforms NANL to norlonine which is monomethylated and dimethylated to respectively lonine and N-methyllonine (NML) by lolM. LolP catalyzes hydroxylation of the methyl group in N-methylloline (NML) and further oxygenation to N-formylloline (NFL). A plant acetyltransferase is responsible for the acetylation of loline to form N-acetylloline (NAL). LolA might interact with aspartate kinase to prevent feedback inhibition of its activity by these end products and thereby promote production of L-homoserine from L-aspartate. The chain is Amino acid decarboxylase lolD2 from Epichloe uncinata (Endophyte fungus).